The chain runs to 228 residues: L-ribulose-5-phosphate 4-epimerase UlaF (228 aa).

Residues 26-27, 43-44, and 72-73 contribute to the substrate site; these read GN, SG, and SS. Asp74, His93, and His95 together coordinate Zn(2+). Asp118 acts as the Proton donor/acceptor in catalysis. Zn(2+) is bound at residue His167. Tyr225 acts as the Proton donor/acceptor in catalysis.

It belongs to the aldolase class II family. AraD/FucA subfamily. Zn(2+) serves as cofactor.

It carries out the reaction L-ribulose 5-phosphate = D-xylulose 5-phosphate. Its pathway is cofactor degradation; L-ascorbate degradation; D-xylulose 5-phosphate from L-ascorbate: step 4/4. In terms of biological role, catalyzes the isomerization of L-ribulose 5-phosphate to D-xylulose 5-phosphate. Is involved in the anaerobic L-ascorbate utilization. The polypeptide is L-ribulose-5-phosphate 4-epimerase UlaF (Shigella boydii serotype 18 (strain CDC 3083-94 / BS512)).